Reading from the N-terminus, the 489-residue chain is Rhamnulokinase (489 aa).

Residue 13 to 17 coordinates ATP; the sequence is ASSGR. The cysteines at positions 68 and 222 are disulfide-linked. Residues Gly83 and 236–238 contribute to the substrate site; that span reads HDT. Asp237 functions as the Proton acceptor in the catalytic mechanism. Thr259 contributes to the ATP binding site. Asn296 provides a ligand contact to substrate. An ATP-binding site is contributed by Gln304. A disulfide bridge connects residues Cys353 and Cys370. Position 402 (Gly402) interacts with ATP. Cysteines 413 and 417 form a disulfide.

It belongs to the rhamnulokinase family. In terms of assembly, monomer. Mg(2+) is required as a cofactor.

The enzyme catalyses L-rhamnulose + ATP = L-rhamnulose 1-phosphate + ADP + H(+). It participates in carbohydrate degradation; L-rhamnose degradation; glycerone phosphate from L-rhamnose: step 2/3. Its function is as follows. Involved in the catabolism of L-rhamnose (6-deoxy-L-mannose). Catalyzes the transfer of the gamma-phosphate group from ATP to the 1-hydroxyl group of L-rhamnulose to yield L-rhamnulose 1-phosphate. In Escherichia coli O157:H7, this protein is Rhamnulokinase.